A 387-amino-acid polypeptide reads, in one-letter code: tRNA pseudouridine synthase B (387 aa).

Residue D43 is the Nucleophile of the active site.

The protein belongs to the pseudouridine synthase TruB family. Type 1 subfamily.

The enzyme catalyses uridine(55) in tRNA = pseudouridine(55) in tRNA. Its function is as follows. Responsible for synthesis of pseudouridine from uracil-55 in the psi GC loop of transfer RNAs. This Bifidobacterium longum subsp. infantis (strain ATCC 15697 / DSM 20088 / JCM 1222 / NCTC 11817 / S12) protein is tRNA pseudouridine synthase B.